Reading from the N-terminus, the 300-residue chain is L-arabinolactonase (300 aa).

Positions 22, 156, and 205 each coordinate a divalent metal cation.

It belongs to the SMP-30/CGR1 family. The cofactor is a divalent metal cation.

The catalysed reaction is L-arabinono-1,4-lactone + H2O = L-arabinonate + H(+). Catalyzes the cleavage of L-arabino-gamma-lactone to L-arabonate. Is involved in a degradation pathway of L-arabinose that allows A.brasilense to grow on L-arabinose as a sole carbon source. Can also use D-galactono-1,4-lactone as substrate in vitro; however, the enzyme is probably not involved in the metabolism of D-galactose in vivo. The sequence is that of L-arabinolactonase (araB) from Azospirillum brasilense.